A 288-amino-acid polypeptide reads, in one-letter code: Quinate/shikimate dehydrogenase (288 aa).

2 residues coordinate substrate: lysine 71 and aspartate 107. Residues 132 to 135, 155 to 158, lysine 205, 232 to 235, and glycine 255 contribute to the NAD(+) site; these read AGGA, NRRD, and CVYN.

The protein belongs to the shikimate dehydrogenase family. As to quaternary structure, homodimer.

The catalysed reaction is L-quinate + NAD(+) = 3-dehydroquinate + NADH + H(+). It carries out the reaction L-quinate + NADP(+) = 3-dehydroquinate + NADPH + H(+). The enzyme catalyses shikimate + NADP(+) = 3-dehydroshikimate + NADPH + H(+). It catalyses the reaction shikimate + NAD(+) = 3-dehydroshikimate + NADH + H(+). The protein operates within metabolic intermediate biosynthesis; chorismate biosynthesis; chorismate from D-erythrose 4-phosphate and phosphoenolpyruvate: step 4/7. Functionally, the actual biological function of YdiB remains unclear, nor is it known whether 3-dehydroshikimate or quinate represents the natural substrate. Catalyzes the reversible NAD-dependent reduction of both 3-dehydroshikimate (DHSA) and 3-dehydroquinate to yield shikimate (SA) and quinate, respectively. It can use both NAD or NADP for catalysis, however it has higher catalytic efficiency with NAD. This Escherichia coli O139:H28 (strain E24377A / ETEC) protein is Quinate/shikimate dehydrogenase.